Here is a 149-residue protein sequence, read N- to C-terminus: Placenta growth factor (149 aa).

The N-terminal stretch at 1–18 (MPTVRLFTCFLQLLTGLV) is a signal peptide. The N-linked (GlcNAc...) asparagine glycan is linked to Asn-33. Intrachain disulfides connect Cys-52–Cys-94, Cys-83–Cys-128, and Cys-87–Cys-130. N-linked (GlcNAc...) asparagine glycosylation is present at Asn-101.

It belongs to the PDGF/VEGF growth factor family. Antiparallel homodimer; disulfide-linked. Also found as heterodimer with VEGFA/VEGF.

It is found in the secreted. Functionally, growth factor active in angiogenesis and endothelial cell growth, stimulating their proliferation and migration. It binds to the receptor FLT1/VEGFR-1. Also promotes cell tumor growth. The protein is Placenta growth factor (PGF) of Bos taurus (Bovine).